The sequence spans 312 residues: Zinc import ATP-binding protein ZnuC (312 aa).

Residues 13-228 form the ABC transporter domain; it reads VSLEDVGVLR…PEYVRLFGSR (216 aa). 45–52 lines the ATP pocket; the sequence is GPNGSGKS. Positions 241 to 312 are disordered; sequence DHTHLPDGRV…HSRSGEGRHA (72 aa). The segment covering 243–312 has biased composition (basic and acidic residues); sequence THLPDGRVLH…HSRSGEGRHA (70 aa).

This sequence belongs to the ABC transporter superfamily. Zinc importer (TC 3.A.1.15.5) family. In terms of assembly, the complex is composed of two ATP-binding proteins (ZnuC), two transmembrane proteins (ZnuB) and a solute-binding protein (ZnuA).

It is found in the cell inner membrane. It catalyses the reaction Zn(2+)(out) + ATP(in) + H2O(in) = Zn(2+)(in) + ADP(in) + phosphate(in) + H(+)(in). In terms of biological role, part of the ABC transporter complex ZnuABC involved in zinc import. Responsible for energy coupling to the transport system. This chain is Zinc import ATP-binding protein ZnuC, found in Rhizobium etli (strain ATCC 51251 / DSM 11541 / JCM 21823 / NBRC 15573 / CFN 42).